Consider the following 274-residue polypeptide: Formamidopyrimidine-DNA glycosylase (274 aa).

Pro2 serves as the catalytic Schiff-base intermediate with DNA. Catalysis depends on Glu3, which acts as the Proton donor. The active-site Proton donor; for beta-elimination activity is Lys56. Positions 89, 107, and 148 each coordinate DNA. The FPG-type zinc-finger motif lies at 233-267 (LAYGRAREMCVNCETTLENLKLGQRASVFCPQCQP). Arg257 functions as the Proton donor; for delta-elimination activity in the catalytic mechanism.

The protein belongs to the FPG family. Monomer. Requires Zn(2+) as cofactor.

The enzyme catalyses Hydrolysis of DNA containing ring-opened 7-methylguanine residues, releasing 2,6-diamino-4-hydroxy-5-(N-methyl)formamidopyrimidine.. It catalyses the reaction 2'-deoxyribonucleotide-(2'-deoxyribose 5'-phosphate)-2'-deoxyribonucleotide-DNA = a 3'-end 2'-deoxyribonucleotide-(2,3-dehydro-2,3-deoxyribose 5'-phosphate)-DNA + a 5'-end 5'-phospho-2'-deoxyribonucleoside-DNA + H(+). Its function is as follows. Involved in base excision repair of DNA damaged by oxidation or by mutagenic agents. Acts as a DNA glycosylase that recognizes and removes damaged bases. Has a preference for oxidized purines, such as 7,8-dihydro-8-oxoguanine (8-oxoG). Has AP (apurinic/apyrimidinic) lyase activity and introduces nicks in the DNA strand. Cleaves the DNA backbone by beta-delta elimination to generate a single-strand break at the site of the removed base with both 3'- and 5'-phosphates. In Acinetobacter baumannii (strain SDF), this protein is Formamidopyrimidine-DNA glycosylase.